Reading from the N-terminus, the 350-residue chain is Glutamyl-tRNA reductase (350 aa).

Substrate is bound by residues 53–56, Ser105, 110–112, and Gln116; these read TCNR and ETQ. Residue Cys54 is the Nucleophile of the active site. 185 to 190 lines the NADP(+) pocket; sequence GAGETA.

This sequence belongs to the glutamyl-tRNA reductase family. As to quaternary structure, homodimer.

The catalysed reaction is (S)-4-amino-5-oxopentanoate + tRNA(Glu) + NADP(+) = L-glutamyl-tRNA(Glu) + NADPH + H(+). Its pathway is porphyrin-containing compound metabolism; protoporphyrin-IX biosynthesis; 5-aminolevulinate from L-glutamyl-tRNA(Glu): step 1/2. Functionally, catalyzes the NADPH-dependent reduction of glutamyl-tRNA(Glu) to glutamate 1-semialdehyde (GSA). In Deinococcus radiodurans (strain ATCC 13939 / DSM 20539 / JCM 16871 / CCUG 27074 / LMG 4051 / NBRC 15346 / NCIMB 9279 / VKM B-1422 / R1), this protein is Glutamyl-tRNA reductase.